Reading from the N-terminus, the 144-residue chain is HTH-type transcriptional regulator MntR (144 aa).

Positions 1-63 constitute an HTH dtxR-type domain; sequence MTTPSMEDYI…YEKYRGLILT (63 aa). Positions 8, 11, 77, 99, 102, and 103 each coordinate Mn(2+).

Belongs to the DtxR/MntR family. In terms of assembly, homodimer.

It is found in the cytoplasm. Its activity is regulated as follows. DNA binding is strongly activated by Mn(2+). Central regulator of manganese homeostasis. The polypeptide is HTH-type transcriptional regulator MntR (Bacillus pumilus (strain SAFR-032)).